The primary structure comprises 131 residues: Insulin-like 3 (131 aa).

The first 20 residues, 1 to 20 (MDPRLPAWALVLLGPALVFA), serve as a signal peptide directing secretion. 3 cysteine pairs are disulfide-bonded: cysteine 34-cysteine 116, cysteine 46-cysteine 129, and cysteine 115-cysteine 120. Positions 58–104 (PATGGDRELLQWLERRHLLHGLVADSNLTLGPGLQPLPQTSHHHRHH) are cleaved as a propeptide — c peptide like.

This sequence belongs to the insulin family. Heterodimer of a B chain and an A chain linked by two disulfide bonds. In terms of tissue distribution, expressed in prenatal and postnatal Leydig cells. Found as well in the corpus luteum, trophoblast, fetal membranes and breast.

It is found in the secreted. Seems to play a role in testicular function. May be a trophic hormone with a role in testicular descent in fetal life. Is a ligand for LGR8 receptor. This chain is Insulin-like 3 (INSL3), found in Homo sapiens (Human).